A 415-amino-acid polypeptide reads, in one-letter code: Enolase (415 aa).

(2R)-2-phosphoglycerate is bound at residue Q161. The active-site Proton donor is the E203. The Mg(2+) site is built by D240, E281, and D308. (2R)-2-phosphoglycerate contacts are provided by K333, R362, S363, and K384. The active-site Proton acceptor is the K333.

The protein belongs to the enolase family. Mg(2+) serves as cofactor.

Its subcellular location is the cytoplasm. It localises to the secreted. The protein localises to the cell surface. It catalyses the reaction (2R)-2-phosphoglycerate = phosphoenolpyruvate + H2O. Its pathway is carbohydrate degradation; glycolysis; pyruvate from D-glyceraldehyde 3-phosphate: step 4/5. Its function is as follows. Catalyzes the reversible conversion of 2-phosphoglycerate (2-PG) into phosphoenolpyruvate (PEP). It is essential for the degradation of carbohydrates via glycolysis. The chain is Enolase from Campylobacter hominis (strain ATCC BAA-381 / DSM 21671 / CCUG 45161 / LMG 19568 / NCTC 13146 / CH001A).